Here is a 367-residue protein sequence, read N- to C-terminus: Zinc finger CCCH domain-containing protein 56 (367 aa).

The disordered stretch occupies residues 38–80 (YNSQWNADGGGGGSSRAGSEQPPPGKKSRGGGGGEGGGNTSKS). Residues 67-76 (GGGGGEGGGN) show a composition bias toward gly residues. C3H1-type zinc fingers lie at residues 87–114 (FFKT…HGME), 169–197 (AYKG…HDEQ), and 245–273 (NWKT…HGAA).

The protein is Zinc finger CCCH domain-containing protein 56 of Oryza sativa subsp. japonica (Rice).